We begin with the raw amino-acid sequence, 217 residues long: Phosphatidylserine decarboxylase proenzyme (217 aa).

The active-site Schiff-base intermediate with substrate; via pyruvic acid is the Ser182. A Pyruvic acid (Ser); by autocatalysis modification is found at Ser182.

It belongs to the phosphatidylserine decarboxylase family. PSD-A subfamily. As to quaternary structure, heterodimer of a large membrane-associated beta subunit and a small pyruvoyl-containing alpha subunit. The cofactor is pyruvate. In terms of processing, is synthesized initially as an inactive proenzyme. Formation of the active enzyme involves a self-maturation process in which the active site pyruvoyl group is generated from an internal serine residue via an autocatalytic post-translational modification. Two non-identical subunits are generated from the proenzyme in this reaction, and the pyruvate is formed at the N-terminus of the alpha chain, which is derived from the carboxyl end of the proenzyme. The post-translation cleavage follows an unusual pathway, termed non-hydrolytic serinolysis, in which the side chain hydroxyl group of the serine supplies its oxygen atom to form the C-terminus of the beta chain, while the remainder of the serine residue undergoes an oxidative deamination to produce ammonia and the pyruvoyl prosthetic group on the alpha chain.

It is found in the cell membrane. The enzyme catalyses a 1,2-diacyl-sn-glycero-3-phospho-L-serine + H(+) = a 1,2-diacyl-sn-glycero-3-phosphoethanolamine + CO2. Its pathway is phospholipid metabolism; phosphatidylethanolamine biosynthesis; phosphatidylethanolamine from CDP-diacylglycerol: step 2/2. Its function is as follows. Catalyzes the formation of phosphatidylethanolamine (PtdEtn) from phosphatidylserine (PtdSer). The protein is Phosphatidylserine decarboxylase proenzyme of Nitratidesulfovibrio vulgaris (strain ATCC 29579 / DSM 644 / CCUG 34227 / NCIMB 8303 / VKM B-1760 / Hildenborough) (Desulfovibrio vulgaris).